A 272-amino-acid chain; its full sequence is Ribosomal RNA small subunit methyltransferase A (272 aa).

The S-adenosyl-L-methionine site is built by His-10, Leu-12, Gly-37, Glu-57, Asp-82, and Asn-98.

This sequence belongs to the class I-like SAM-binding methyltransferase superfamily. rRNA adenine N(6)-methyltransferase family. RsmA subfamily.

It localises to the cytoplasm. The catalysed reaction is adenosine(1518)/adenosine(1519) in 16S rRNA + 4 S-adenosyl-L-methionine = N(6)-dimethyladenosine(1518)/N(6)-dimethyladenosine(1519) in 16S rRNA + 4 S-adenosyl-L-homocysteine + 4 H(+). In terms of biological role, specifically dimethylates two adjacent adenosines (A1518 and A1519) in the loop of a conserved hairpin near the 3'-end of 16S rRNA in the 30S particle. May play a critical role in biogenesis of 30S subunits. The sequence is that of Ribosomal RNA small subunit methyltransferase A from Gloeobacter violaceus (strain ATCC 29082 / PCC 7421).